The primary structure comprises 336 residues: CST complex subunit STN1 (336 aa).

Residues 49–126 (VDILGTVVCV…EVVASIFYKV (78 aa)) constitute a DNA-binding region (OB). 2 winged helix-turn-helix (wHTH) regions span residues 162-263 (QSQE…YVTD) and 264-336 (HDKE…YTAF).

The protein belongs to the CTC1 family. In terms of assembly, component of the CST complex.

The protein resides in the nucleus. It localises to the chromosome. It is found in the telomere. Its function is as follows. Component of the CST complex proposed to act as a specialized replication factor promoting DNA replication under conditions of replication stress or natural replication barriers such as the telomere duplex. The CST complex binds single-stranded DNA with high affinity in a sequence-independent manner, while isolated subunits bind DNA with low affinity by themselves. Initially the CST complex has been proposed to protect telomeres from DNA degradation. However, the CST complex has been shown to be involved in several aspects of telomere replication. This Aquarana catesbeiana (American bullfrog) protein is CST complex subunit STN1.